A 264-amino-acid polypeptide reads, in one-letter code: Undecaprenyl-diphosphatase (264 aa).

The next 8 helical transmembrane spans lie at 1 to 21, 39 to 59, 83 to 103, 113 to 133, 143 to 163, 181 to 201, 220 to 240, and 244 to 264; these read MDIVHIIVLSLVQGITEFLPI, QGLAFDVAVHIGTLTAIVFYF, STLVWAVCFATIPAGIFGLAF, SGIVIAVTTIIFGVVLYLADK, VTIKLALIIGLAQALALIPGV, VGSANFSFLMSIPIILLAGGL, LAALISAVSAYICVKLFMSII, and SMTPFVVYRLILGVFLLFIFV.

This sequence belongs to the UppP family.

It localises to the cell inner membrane. The catalysed reaction is di-trans,octa-cis-undecaprenyl diphosphate + H2O = di-trans,octa-cis-undecaprenyl phosphate + phosphate + H(+). Its function is as follows. Catalyzes the dephosphorylation of undecaprenyl diphosphate (UPP). Confers resistance to bacitracin. In Campylobacter curvus (strain 525.92), this protein is Undecaprenyl-diphosphatase.